Reading from the N-terminus, the 222-residue chain is Coiled-coil domain-containing protein 43 homolog (222 aa).

Positions 80-111 (ETENKLKLTNLKLEQELKIKETTQSEINEEEK) form a coiled coil. 2 disordered regions span residues 102–126 (TQSEINEEEKYENPYHKMSREEQKK) and 159–222 (EDNK…KRRL). Basic and acidic residues-rich tracts occupy residues 112 to 126 (YENPYHKMSREEQKK) and 175 to 212 (RIADEEKAKREKSKIEHQKKVQRDKEALEKQKRDEEKK). Positions 168-222 (GENLNAKRIADEEKAKREKSKIEHQKKVQRDKEALEKQKRDEEKKKTVKKEKRRL) form a coiled coil. The span at 213-222 (KTVKKEKRRL) shows a compositional bias: basic residues.

This sequence belongs to the CCDC43 family.

In Dictyostelium discoideum (Social amoeba), this protein is Coiled-coil domain-containing protein 43 homolog.